Here is a 588-residue protein sequence, read N- to C-terminus: Adenine deaminase (588 aa).

The protein belongs to the metallo-dependent hydrolases superfamily. Adenine deaminase family. Homodimer. Mn(2+) serves as cofactor.

The enzyme catalyses adenine + H2O + H(+) = hypoxanthine + NH4(+). The polypeptide is Adenine deaminase (Escherichia coli (strain 55989 / EAEC)).